The chain runs to 229 residues: MQTTAKSSTPSITAVVAATAENGIGLNGGLPWRLPGEMKYFARVTTGETPSSDPSEQNVVIMGRKTWESIPSRFRPLKNRRNVVISGKGVDLGTAENSTVYTDIPSALSALRSTTESGHSPRIFLIGGATLYTSSLLPSSVPSLNSSTSTSPLPFSRPLIDRILLTRILSPFECDAYLEDFAAHTKPDGSKVWKKASIKEFREWIGWDIEEQVEEKGVKYIFEMWVLNQ.

In terms of domain architecture, DHFR spans 11-227 (SITAVVAATA…VKYIFEMWVL (217 aa)). NADP(+) is bound by residues alanine 17 and 23–29 (GIGLNGG). 37–42 (EMKYFA) is a binding site for substrate. 64 to 66 (RKT) lines the NADP(+) pocket. Arginine 80 is a binding site for substrate. Residues 86–88 (SGK) and 127–134 (GGATLYTS) contribute to the NADP(+) site.

This sequence belongs to the dihydrofolate reductase family. In terms of assembly, monomer.

The catalysed reaction is (6S)-5,6,7,8-tetrahydrofolate + NADP(+) = 7,8-dihydrofolate + NADPH + H(+). It participates in cofactor biosynthesis; tetrahydrofolate biosynthesis; 5,6,7,8-tetrahydrofolate from 7,8-dihydrofolate: step 1/1. Key enzyme in folate metabolism. Catalyzes an essential reaction for de novo glycine and purine synthesis, and for DNA precursor synthesis. This is Dihydrofolate reductase (DFR1) from Cryptococcus neoformans var. neoformans serotype D (strain JEC21 / ATCC MYA-565) (Filobasidiella neoformans).